Consider the following 328-residue polypeptide: Sin3 histone deacetylase corepressor complex component SDS3 (328 aa).

The segment covering 1–16 (MSAAGLLAPAPAQAGA) has biased composition (low complexity). Residues 1 to 65 (MSAAGLLAPA…DLAKHDEEDY (65 aa)) are disordered. Ser-2 is subject to N-acetylserine. Positions 2-170 (SAAGLLAPAP…IENEKLTMEL (169 aa)) are mediates interaction with USP17L2. Acidic residues-rich tracts occupy residues 23–37 (YPEE…EEDE) and 45–54 (SDEDTEDASE). A phosphoserine mark is found at Ser-32 and Ser-45. Thr-49 carries the phosphothreonine modification. The residue at position 53 (Ser-53) is a Phosphoserine. Residues 56-65 (DLAKHDEEDY) are compositionally biased toward basic and acidic residues. The stretch at 66-171 (VEMKEQMYQD…ENEKLTMELT (106 aa)) forms a coiled coil. Glycyl lysine isopeptide (Lys-Gly) (interchain with G-Cter in SUMO2) cross-links involve residues Lys-69, Lys-178, and Lys-201. Residues 188 to 226 (RPNDPVPIPDKRRKPAPAQLNYLLTDEQIMEDLRTLNKL) form a sin3 interaction domain (SID) region. The tract at residues 226 to 252 (LKSPKRPASPSSPEHLPATPAESPAQR) is disordered. Phosphoserine occurs at positions 228, 234, and 237. Thr-244 carries the phosphothreonine modification.

This sequence belongs to the SDS3 family. As to quaternary structure, interacts with HCFC1. Homodimer. Component of the SIN3 histone deacetylase (HDAC) corepressor complex. Interacts with SIN3A. Interaction with SIN3B enhances the interaction between SIN3B and HDAC1 to form a complex. Component of a mSin3A corepressor complex that contains SIN3A, SAP130, SUDS3/SAP45, ARID4B/SAP180, HDAC1 and HDAC2. Interacts with USP17L2; the interaction is direct. Interacts with FOXK2. In terms of processing, polyubiquitinated. 'Lys-63'-polyubiquitinated SUDS3 positively regulates histone deacetylation. Regulated through deubiquitination by USP17L2/USP17 that cleaves 'Lys-63'-linked ubiquitin chains.

The protein localises to the nucleus. Regulatory protein which represses transcription and augments histone deacetylase activity of HDAC1. May have a potential role in tumor suppressor pathways through regulation of apoptosis. May function in the assembly and/or enzymatic activity of the mSin3A corepressor complex or in mediating interactions between the complex and other regulatory complexes. The polypeptide is Sin3 histone deacetylase corepressor complex component SDS3 (SUDS3) (Pongo abelii (Sumatran orangutan)).